Reading from the N-terminus, the 223-residue chain is Ion-translocating oxidoreductase complex subunit E (223 aa).

6 consecutive transmembrane segments (helical) span residues 17 to 37 (NGVL…GTAT), 40 to 60 (LGMG…VAMF), 70 to 90 (IPVY…GMNA), 94 to 114 (ELYK…LPLA), 129 to 149 (FLDG…IGAV), and 182 to 202 (WGIL…LMVV).

The protein belongs to the NqrDE/RnfAE family. As to quaternary structure, the complex is composed of six subunits: RnfA, RnfB, RnfC, RnfD, RnfE and RnfG.

It is found in the cell inner membrane. Part of a membrane-bound complex that couples electron transfer with translocation of ions across the membrane. The protein is Ion-translocating oxidoreductase complex subunit E of Paramagnetospirillum magneticum (strain ATCC 700264 / AMB-1) (Magnetospirillum magneticum).